The sequence spans 315 residues: Putative quercetin 2,3-dioxygenase PA1205 (315 aa).

Positions 77, 79, 121, and 123 each coordinate a divalent metal cation.

This sequence belongs to the pirin family. A divalent metal cation serves as cofactor.

The enzyme catalyses quercetin + O2 = 2-(3,4-dihydroxybenzoyloxy)-4,6-dihydroxybenzoate + CO. It participates in flavonoid metabolism; quercetin degradation. Functionally, putative quercetin 2,3-dioxygenase. This is Putative quercetin 2,3-dioxygenase PA1205 from Pseudomonas aeruginosa (strain ATCC 15692 / DSM 22644 / CIP 104116 / JCM 14847 / LMG 12228 / 1C / PRS 101 / PAO1).